A 508-amino-acid polypeptide reads, in one-letter code: Pentatricopeptide repeat-containing protein At5g48730, chloroplastic (508 aa).

A compositionally biased stretch (polar residues) spans 1 to 10 (MVSLSTSTSH). The segment at 1–22 (MVSLSTSTSHAPPLPTNRRTAE) is disordered. Residues 1–28 (MVSLSTSTSHAPPLPTNRRTAERTFTVR) constitute a chloroplast transit peptide. PPR repeat units follow at residues 149–183 (NVGIYVKLIVMLGKCKQPEKAHELFQEMINEGCVV), 184–214 (NHEVYTALVSAYSRSGRFDAAFTLLERMKSS), 220–254 (DVHTYSILIKSFLQVFAFDKVQDLLSDMRRQGIRP), 255–290 (NTITYNTLIDAYGKAKMFVEMESTLIQMLGEDDCKP), 291–325 (DSWTMNSTLRAFGGNGQIEMMENCYEKFQSSGIEP), 326–360 (NIRTFNILLDSYGKSGNYKKMSAVMEYMQKYHYSW), 361–395 (TIVTYNVVIDAFGRAGDLKQMEYLFRLMQSERIFP), 396–430 (SCVTLCSLVRAYGRASKADKIGGVLRFIENSDIRL), 431–465 (DLVFFNCLVDAYGRMEKFAEMKGVLELMEKKGFKP), and 466–500 (DKITYRTMVKAYRISGMTTHVKELHGVVESVGEAQ).

The protein belongs to the PPR family. P subfamily.

It is found in the plastid. The protein localises to the chloroplast. This is Pentatricopeptide repeat-containing protein At5g48730, chloroplastic from Arabidopsis thaliana (Mouse-ear cress).